The following is a 97-amino-acid chain: Co-chaperonin GroES (97 aa).

The protein belongs to the GroES chaperonin family. As to quaternary structure, heptamer of 7 subunits arranged in a ring. Interacts with the chaperonin GroEL.

It localises to the cytoplasm. Functionally, together with the chaperonin GroEL, plays an essential role in assisting protein folding. The GroEL-GroES system forms a nano-cage that allows encapsulation of the non-native substrate proteins and provides a physical environment optimized to promote and accelerate protein folding. GroES binds to the apical surface of the GroEL ring, thereby capping the opening of the GroEL channel. The sequence is that of Co-chaperonin GroES from Symbiobacterium thermophilum (strain DSM 24528 / JCM 14929 / IAM 14863 / T).